Consider the following 734-residue polypeptide: Predicted GPI-anchored protein 49 (734 aa).

An N-terminal signal peptide occupies residues 1–16; sequence MNYITSLLLLSSNTFL. N-linked (GlcNAc...) asparagine glycans are attached at residues Asn-27, Asn-56, Asn-68, and Asn-71. The interval 78–145 is disordered; the sequence is DNSDTDIDDS…NESDTQNEND (68 aa). Over residues 87–98 the composition is skewed to low complexity; sequence SSSNSEDVSSND. N-linked (GlcNAc...) asparagine glycans are attached at residues Asn-105, Asn-118, Asn-136, and Asn-180. Residues 110–129 are compositionally biased toward acidic residues; the sequence is FSDESDEGNDSDDNGDEVEN. A compositionally biased stretch (polar residues) spans 130 to 141; that stretch reads MENNQANESDTQ. Disordered regions lie at residues 216–262 and 331–360; these read SPKS…LKSK and DANP…RLPT. Over residues 228 to 259 the composition is skewed to basic residues; that stretch reads SRKKTLKSKSKSKSSKLKHKSRKSHKRRPKLL. N-linked (GlcNAc...) asparagine glycosylation is found at Asn-388 and Asn-427. The interval 447–479 is disordered; it reads PPRYSNHHSEFTVERPPRPSRTKKRPRIKAKKT. The segment covering 453-463 has biased composition (basic and acidic residues); the sequence is HHSEFTVERPP. The segment covering 464–479 has biased composition (basic residues); that stretch reads RPSRTKKRPRIKAKKT. Residue Asn-517 is glycosylated (N-linked (GlcNAc...) asparagine). The disordered stretch occupies residues 582–653; the sequence is KPQETKLHSP…STTSTKPNDQ (72 aa). The segment covering 592 to 611 has biased composition (low complexity); the sequence is TSTDTKSSKLMSSSSSNNNK. Residues 620–631 are compositionally biased toward polar residues; sequence EYNQTQESTSYN. Asn-622 and Asn-631 each carry an N-linked (GlcNAc...) asparagine glycan. Low complexity predominate over residues 632–650; sequence TTKAVPKTSVVSSTTSTKP. A lipid anchor (GPI-anchor amidated serine) is attached at Ser-707. Positions 708-734 are cleaved as a propeptide — removed in mature form; sequence ASQNLSFSVLGLIILLLLLPGLLIIIM. A glycan (N-linked (GlcNAc...) asparagine) is linked at Asn-711.

It localises to the cell membrane. This is Predicted GPI-anchored protein 49 (PGA49) from Candida albicans (strain SC5314 / ATCC MYA-2876) (Yeast).